The primary structure comprises 492 residues: Serine/threonine protein phosphatase 2A 57 kDa regulatory subunit B' theta isoform (492 aa).

The disordered stretch occupies residues 1–63; sequence MWKQILSKLP…GFKEGNLKGN (63 aa). The span at 16-39 shows a compositional bias: low complexity; the sequence is KNHSSSSSSTSKSSDNGASKSGNS. The Microbody targeting signal signature appears at 490 to 492; the sequence is SSL.

It belongs to the phosphatase 2A regulatory subunit B56 family. In terms of assembly, PP2A consists of a common heteromeric enzyme, composed of a catalytic subunit (subunits C), a constant regulatory subunit (subunit A), and a variety of regulatory subunits such as subunits B (the R2/B/PR55/B55, R3/B''/PR72/PR130/PR59 and R5/B'/B56 families). Interacts with BZR1. Interacts with PP2A2, PP2A5 and PP2AA2. In terms of tissue distribution, highly expressed in dry seeds. Expressed in roots, cotyledons, rosette leaves and flowers.

It localises to the cytoplasm. Its subcellular location is the cytosol. The protein resides in the peroxisome. Functionally, the B regulatory subunit may modulate substrate selectivity and catalytic activity, and may also direct the localization of the catalytic enzyme to a particular subcellular compartment. Associates with the serine/threonine-protein phosphatase PP2A catalytic subunit C and regulatory subunit A to positively regulates beta-oxidation of fatty acids and protoauxins in peroxisomes by dephosphorylating peroxisomal beta-oxidation-related proteins. Required for the formation of the PP2A holoenzyme that negatively regulates brassinosteroid signaling by dephosphorylating and inactivating BRI1 in the cytoplasm. The sequence is that of Serine/threonine protein phosphatase 2A 57 kDa regulatory subunit B' theta isoform (B'THETA) from Arabidopsis thaliana (Mouse-ear cress).